The following is a 156-amino-acid chain: Probable cyclic pyranopterin monophosphate synthase (156 aa).

Substrate contacts are provided by residues leucine 74 to histidine 76 and methionine 110 to glutamate 111. Aspartate 125 is an active-site residue.

Belongs to the MoaC family. Homohexamer; trimer of dimers.

It carries out the reaction (8S)-3',8-cyclo-7,8-dihydroguanosine 5'-triphosphate = cyclic pyranopterin phosphate + diphosphate. Its pathway is cofactor biosynthesis; molybdopterin biosynthesis. Catalyzes the conversion of (8S)-3',8-cyclo-7,8-dihydroguanosine 5'-triphosphate to cyclic pyranopterin monophosphate (cPMP). The polypeptide is Probable cyclic pyranopterin monophosphate synthase (Thermococcus kodakarensis (strain ATCC BAA-918 / JCM 12380 / KOD1) (Pyrococcus kodakaraensis (strain KOD1))).